Consider the following 81-residue polypeptide: Protein RALF-like 6 (81 aa).

The N-terminal stretch at 1 to 29 (MAAHKKSHIRIFFVSVMIILSLFSGFGEG) is a signal peptide. Intrachain disulfides connect C46-C54 and C66-C72.

The protein belongs to the plant rapid alkalinization factor (RALF) family.

The protein resides in the secreted. Cell signaling peptide that may regulate plant stress, growth, and development. Mediates a rapid alkalinization of extracellular space by mediating a transient increase in the cytoplasmic Ca(2+) concentration leading to a calcium-dependent signaling events through a cell surface receptor and a concomitant activation of some intracellular mitogen-activated protein kinases. The polypeptide is Protein RALF-like 6 (RALFL6) (Arabidopsis thaliana (Mouse-ear cress)).